Here is a 1690-residue protein sequence, read N- to C-terminus: Lysine-specific demethylase 5A (1690 aa).

Residues 19–60 (CPVFEPSWEEFTDPLSFIGRIRPLAEKTGICKIRPPKDWQPP) enclose the JmjN domain. Residues 84–174 (TRVRLDFLDQ…ILYPYELFQS (91 aa)) enclose the ARID domain. Lys191 is covalently cross-linked (Glycyl lysine isopeptide (Lys-Gly) (interchain with G-Cter in SUMO2)). Ser204 is modified (phosphoserine). The PHD-type 1 zinc finger occupies 293–343 (LYVCMFCGRGNNEDKLLLCDGCDDSYHTFCLIPPLPDVPKGDWRCPKCVAE). Tyr409 is a 2-oxoglutarate binding site. Positions 419-423 (GSGFP) match the GSGFP motif motif. The region spanning 437-603 (EYALSGWNLN…IGRQCVNHYR (167 aa)) is the JmjC domain. 2 residues coordinate Fe cation: His483 and Glu485. Residues Ser491, Asn493, and Lys501 each contribute to the 2-oxoglutarate site. His571 lines the Fe cation pocket. The C5HC2 zinc finger occupies 676–728 (CSACRTTCFLSALTCSCNPERLVCLYHPTDLCPCPMQKKCLRYRYPLEDLPSL). A Glycyl lysine isopeptide (Lys-Gly) (interchain with G-Cter in SUMO2) cross-link involves residue Lys1007. The residue at position 1111 (Ser1111) is a Phosphoserine. Residues 1161-1218 (VKFCICRKTASGFMLQCELCKDWFHNSCVPLPKSSSQKKGSSWQAKEVKFLCPLCMRS) form a PHD-type 2 zinc finger. Disordered stretches follow at residues 1327 to 1348 (SVSS…SDED) and 1407 to 1433 (KSCS…LEPP). Phosphoserine is present on residues Ser1330 and Ser1331. A compositionally biased stretch (acidic residues) spans 1337-1348 (DYDDEETDSDED). Phosphothreonine is present on Thr1343. Ser1345 is modified (phosphoserine). A phosphoserine mark is found at Ser1438 and Ser1488. 2 stretches are compositionally biased toward basic and acidic residues: residues 1490-1503 (EEKP…DSSE) and 1520-1530 (GKQKSKELKKM). Disordered stretches follow at residues 1490-1509 (EEKP…RKRK) and 1516-1543 (LFGE…LGAD). Tyr1595 is modified (phosphotyrosine). Residues Ser1598 and Ser1603 each carry the phosphoserine modification. A PHD-type 3 zinc finger spans residues 1607–1661 (NAVCAAQNCQRPCKDKVDWVQCDGGCDEWFHQVCVGVSPEMAENEDYICINCAKK). The interval 1623–1690 (VDWVQCDGGC…LPMEDLKETS (68 aa)) is interaction with LMO2. Residue Ser1666 is modified to Phosphoserine.

It belongs to the JARID1 histone demethylase family. Interacts with SUZ12; the interaction is direct. Interacts with the viral protein-binding domain of RB1. Interacts with ESR1, MYC, MYCN and LMO2. Interacts with HDAC1; this interaction impairs histone deacetylation by HDAC1. Interacts with BMAL1 and CLOCK. Interacts (via PHD-type 1 zinc finger) with histone H3 unmodified at 'Lys-4' and (via PHD-type 3 zinc finger) with histone H3 di- and trimethylated at 'Lys-4'. The cofactor is Fe(2+).

It localises to the nucleus. It is found in the nucleolus. It catalyses the reaction N(6),N(6),N(6)-trimethyl-L-lysyl(4)-[histone H3] + 3 2-oxoglutarate + 3 O2 = L-lysyl(4)-[histone H3] + 3 formaldehyde + 3 succinate + 3 CO2. The inhibitors KDOAM-25, CPI-455 and others inhibits its demethylase activity, resulting to cell growth arrest in cancer cells. In terms of biological role, histone demethylase that specifically demethylates 'Lys-4' of histone H3, thereby playing a central role in histone code. Does not demethylate histone H3 'Lys-9', H3 'Lys-27', H3 'Lys-36', H3 'Lys-79' or H4 'Lys-20'. Demethylates trimethylated and dimethylated but not monomethylated H3 'Lys-4'. Regulates specific gene transcription through DNA-binding on 5'-CCGCCC-3' motif. May stimulate transcription mediated by nuclear receptors. Involved in transcriptional regulation of Hox proteins during cell differentiation. May participate in transcriptional repression of cytokines such as CXCL12. Plays a role in the regulation of the circadian rhythm and in maintaining the normal periodicity of the circadian clock. In a histone demethylase-independent manner, acts as a coactivator of the CLOCK-BMAL1-mediated transcriptional activation of PER1/2 and other clock-controlled genes and increases histone acetylation at PER1/2 promoters by inhibiting the activity of HDAC1. Seems to act as a transcriptional corepressor for some genes such as MT1F and to favor the proliferation of cancer cells. The sequence is that of Lysine-specific demethylase 5A from Homo sapiens (Human).